The sequence spans 322 residues: SQDFCTDLAVSSANFVPTVTAISTSPDLQWLVQPTLISSVAPSQNRGHPYGVPAPAPPAAYSRPAVLKAPGGRGQSIGRRGKVEQLSPEEEEKRRIRRERNKMAAAKCRNRRRELTDTLQAETDQLEEEKSALQAEIANLLKEKEKLEFILAAHRPACKMPEELRFSEELAAATALDLGAPSPAAAEEAFALPLMTEAPPAVPPKEPSGSGLELKAEPFDELLFSAGPREASRSVPDMDLPGASSFYASDWEPLGAGSGGELEPLCTPVVTCTPCPSTYTSTFVFTYPEADAFPSCAAAHRKGSSSNEPSSDSLSSPTLLAL.

The segment at 69-95 (APGGRGQSIGRRGKVEQLSPEEEEKRR) is disordered. A bZIP domain is found at 91-154 (EEKRRIRRER…EKLEFILAAH (64 aa)). Residues 93-113 (KRRIRRERNKMAAAKCRNRRR) form a basic motif region. The segment at 119 to 147 (LQAETDQLEEEKSALQAEIANLLKEKEKL) is leucine-zipper. Residues 298-322 (AAHRKGSSSNEPSSDSLSSPTLLAL) form a disordered region. Residues 304–316 (SSSNEPSSDSLSS) are compositionally biased toward low complexity.

The protein belongs to the bZIP family. Fos subfamily.

It localises to the host nucleus. The polypeptide is p55-v-Fos-transforming protein (V-FOS) (Galliformes).